Consider the following 160-residue polypeptide: SsrA-binding protein (160 aa).

This sequence belongs to the SmpB family.

The protein localises to the cytoplasm. Required for rescue of stalled ribosomes mediated by trans-translation. Binds to transfer-messenger RNA (tmRNA), required for stable association of tmRNA with ribosomes. tmRNA and SmpB together mimic tRNA shape, replacing the anticodon stem-loop with SmpB. tmRNA is encoded by the ssrA gene; the 2 termini fold to resemble tRNA(Ala) and it encodes a 'tag peptide', a short internal open reading frame. During trans-translation Ala-aminoacylated tmRNA acts like a tRNA, entering the A-site of stalled ribosomes, displacing the stalled mRNA. The ribosome then switches to translate the ORF on the tmRNA; the nascent peptide is terminated with the 'tag peptide' encoded by the tmRNA and targeted for degradation. The ribosome is freed to recommence translation, which seems to be the essential function of trans-translation. This chain is SsrA-binding protein, found in Salmonella arizonae (strain ATCC BAA-731 / CDC346-86 / RSK2980).